Consider the following 339-residue polypeptide: Biotin synthase (339 aa).

The Radical SAM core domain maps to 55–282; that stretch reads NAVQLSTLLS…KAVVRLSAGR (228 aa). [4Fe-4S] cluster-binding residues include C70, C74, and C77. 4 residues coordinate [2Fe-2S] cluster: C114, C145, C205, and R277.

This sequence belongs to the radical SAM superfamily. Biotin synthase family. Homodimer. It depends on [4Fe-4S] cluster as a cofactor. [2Fe-2S] cluster is required as a cofactor.

The enzyme catalyses (4R,5S)-dethiobiotin + (sulfur carrier)-SH + 2 reduced [2Fe-2S]-[ferredoxin] + 2 S-adenosyl-L-methionine = (sulfur carrier)-H + biotin + 2 5'-deoxyadenosine + 2 L-methionine + 2 oxidized [2Fe-2S]-[ferredoxin]. It participates in cofactor biosynthesis; biotin biosynthesis; biotin from 7,8-diaminononanoate: step 2/2. In terms of biological role, catalyzes the conversion of dethiobiotin (DTB) to biotin by the insertion of a sulfur atom into dethiobiotin via a radical-based mechanism. The polypeptide is Biotin synthase (Burkholderia vietnamiensis (strain G4 / LMG 22486) (Burkholderia cepacia (strain R1808))).